The primary structure comprises 332 residues: Leucine carboxyl methyltransferase 1 homolog (332 aa).

Residues Lys22, Arg57, Gly83, Asp107, 153–154 (DL), and Glu180 each bind S-adenosyl-L-methionine.

Belongs to the methyltransferase superfamily. LCMT family.

Its subcellular location is the cytoplasm. It is found in the membrane. The enzyme catalyses [phosphatase 2A protein]-C-terminal L-leucine + S-adenosyl-L-methionine = [phosphatase 2A protein]-C-terminal L-leucine methyl ester + S-adenosyl-L-homocysteine. Its function is as follows. Methylates the carboxyl group of the C-terminal leucine residue of protein phosphatase 2A (PP2A) catalytic subunits to form alpha-leucine ester residues. Involved in brassinosteroid (BR) signaling. Plays a negative role in BR signaling pathway. Functions as a positive regulator of BRI1 receptor-kinase degradation. Methylates PP2A, thus facilitating its association with activated BRI1. This leads to receptor dephosphorylation and degradation, and thus to the termination of BR signaling. May act upstream of ASK7/BIN2. Involved in methylation of PP2A during environmental stress responses. In Arabidopsis thaliana (Mouse-ear cress), this protein is Leucine carboxyl methyltransferase 1 homolog.